The following is a 575-amino-acid chain: Transcription factor COE2 (575 aa).

The segment at 62-65 (RKSN) is interaction with DNA. The C5-type zinc-finger motif lies at 150–169 (CRVLLTHEVMCSRCCEKKSC). Interaction with DNA stretches follow at residues 196–203 (NCLKTAGN) and 235–238 (NNSK). In terms of domain architecture, IPT/TIG spans 253 to 336 (PCIKAISPSE…KGAPGRFIYT (84 aa)). Polar residues predominate over residues 441 to 453 (STQGNNQGYIRNT). The segment at 441 to 479 (STQGNNQGYIRNTSSISPRGYSSSSTPQQSNYSTSSNSM) is disordered. Residues 454–479 (SSISPRGYSSSSTPQQSNYSTSSNSM) show a composition bias toward low complexity.

Belongs to the COE family. Forms either a homodimer or a heterodimer with a related family member. Interacts with SIX1.

It is found in the nucleus. Transcription factor that, in osteoblasts, activates the decoy receptor for RANKL, TNFRSF11B, which in turn regulates osteoclast differentiation. Acts in synergy with the Wnt-responsive LEF1/CTNNB1 pathway. Recognizes variations of the palindromic sequence 5'-ATTCCCNNGGGAATT-3'. This Homo sapiens (Human) protein is Transcription factor COE2 (EBF2).